The chain runs to 72 residues: DNA-directed RNA polymerase subunit omega (72 aa).

It belongs to the RNA polymerase subunit omega family. As to quaternary structure, the RNAP catalytic core consists of 2 alpha, 1 beta, 1 beta' and 1 omega subunit. When a sigma factor is associated with the core the holoenzyme is formed, which can initiate transcription.

The enzyme catalyses RNA(n) + a ribonucleoside 5'-triphosphate = RNA(n+1) + diphosphate. Its function is as follows. Promotes RNA polymerase assembly. Latches the N- and C-terminal regions of the beta' subunit thereby facilitating its interaction with the beta and alpha subunits. The protein is DNA-directed RNA polymerase subunit omega of Clostridium botulinum (strain Loch Maree / Type A3).